The chain runs to 758 residues: Probable C-mannosyltransferase DPY19L2 (758 aa).

Positions 1–58 are disordered; that stretch reads MRKQGVSSKRLQSSGRSQSKGRRGASLAREPEVEEEMEKSALGGGKLPRGSWRSSPGR. The Nuclear portion of the chain corresponds to 1–107; that stretch reads MRKQGVSSKR…ELQARRFSSR (107 aa). Low complexity predominate over residues 7 to 18; it reads SSKRLQSSGRSQ. A helical membrane pass occupies residues 108–128; the sequence is TTLGIAVFVAILHWLHLVTLF. At 129 to 194 the chain is on the perinuclear space side; it reads ENDRHFSHLS…INAIKRFHLY (66 aa). Residues 195 to 215 form a helical membrane-spanning segment; that stretch reads PEVIIASWYCTFMGIMNLFGL. Topologically, residues 216-241 are nuclear; it reads ETKTCWNVTRIEPLNEVQSCEGLGDP. Transmembrane regions (helical) follow at residues 242-262 and 263-283; these read ACFY…LFFM and YGAY…CFFF. Over 284–296 the chain is Nuclear; sequence NHGEATRVMWTPP. The chain crosses the membrane as a helical span at residues 297 to 317; that stretch reads LRESFSYPFLVLQMCILTLIL. Topologically, residues 318-343 are perinuclear space; it reads RTSSNDRRPFIALCLSNVAFMLPWQF. Residues 344 to 364 traverse the membrane as a helical segment; it reads AQFILFTQIASLFPMYVVGYI. Residues 365 to 371 lie on the Nuclear side of the membrane; it reads EPSKFQK. The helical transmembrane segment at 372–392 threads the bilayer; sequence IIYMNMISVTLSFILMFGNSM. The Perinuclear space segment spans residues 393-422; sequence YLSSYYSSSLLMTWAIILKRNEIQKLGVSK. A helical membrane pass occupies residues 423–443; it reads LNFWLIQGSAWWCGTIILKFL. Topologically, residues 444-488 are nuclear; sequence TSKILGVSDHIRLSDLIAARILRYTDFDTLIYTCAPEFDFMEKAT. The helical transmembrane segment at 489–509 threads the bilayer; sequence PLRYTKTLLLPVVMVITCFIF. Residues 510 to 533 are Perinuclear space-facing; sequence KKTVRDISYVLATNIYLRKQLLEH. Residues 534 to 554 traverse the membrane as a helical segment; that stretch reads SELAFHTLQLLVFTALAILIM. Topologically, residues 555-758 are nuclear; sequence RLKMFLTPHM…NSVYRVLKVN (204 aa).

This sequence belongs to the dpy-19 family. In terms of assembly, interacts with FAM209. Widely expressed with high expression in testis. Not detectable in ejaculated sperm (at protein level).

Its subcellular location is the nucleus inner membrane. Its function is as follows. Probable C-mannosyltransferase that mediates C-mannosylation of tryptophan residues on target proteins. In terms of biological role, required during spermatogenesis for sperm head elongation and acrosome formation. Also plays a role in acrosome attachment to the nuclear envelope. This is Probable C-mannosyltransferase DPY19L2 from Homo sapiens (Human).